The chain runs to 677 residues: UPF0313 protein RPA0679 (677 aa).

Positions 335 to 601 (AWDMIKTSVT…VEAIKGLRQR (267 aa)) constitute a Radical SAM core domain. The [4Fe-4S] cluster site is built by Cys-349, Cys-353, and Cys-356. Positions 635 to 677 (RPDQLVPAHQPPGTGKAAGTRRPVRGDGPKPQRFTTKGVRLVK) are disordered.

The protein belongs to the UPF0313 family. [4Fe-4S] cluster is required as a cofactor.

The chain is UPF0313 protein RPA0679 from Rhodopseudomonas palustris (strain ATCC BAA-98 / CGA009).